The primary structure comprises 300 residues: MPPSGRKVSPSVSVVAGATAGAVEGVATFPIEYLKTVSQFAPRDVHGNQQRLSPIEVVRSTLQKEGPKGLFRGCTAMVVGNAGKAGVRFFAFENFRSMLKNKSTGKLSNSSNYLAGMGAGTLEAIFAVTPSETIKTKLIDDSKRAKPRYEQGLVRGTASIVRQEGLAGIYQGVVPVVMRQGSASAIRLGTYSALRDWLPKAHGSGSSLINWLATFSIGAASGVVAVYGTMPFDVLKTRMQAIDAARYRSTWHCLTNTLKTEGAAALWRGSVSRSMRLIVSGGVIFSVYEQVVWLLAGPES.

3 Solcar repeats span residues valine 8–methionine 98, leucine 107–tryptophan 197, and isoleucine 209–leucine 294. 6 consecutive transmembrane segments (helical) span residues serine 11–isoleucine 31, proline 67–valine 87, leucine 114–isoleucine 134, glycine 172–tyrosine 191, leucine 208–glycine 228, and leucine 277–glycine 297.

This sequence belongs to the mitochondrial carrier (TC 2.A.29) family.

It localises to the mitochondrion membrane. Mitochondrial tricarboxylate transporter; part of the gene cluster that mediates the biosynthesis of itaconic acid and 2-hydroxyparaconate. Cis-aconitate is secreted by the mitochondrial tricarboxylate transporter MTT1. In the cytosol cis-aconitate is converted into trans-aconitate via isomerization by the aconitate-delta-isomerase ADI1. Decarboxylation of trans-aconitate by the trans-aconitate decarboxylase TAD1 then leads then to the production of itaconic acid. The cytochrome P450 monooxygenase CYP3 further converts itaconate to 2-hydroxyparaconate via oxidation of the double bond, leading to a transient epoxide, which can subsequently be lactonized to produce 2-hydroxyparaconate. Secretion of itaconate and possibly 2-hydroxyparaconate into the medium is mediated by the major facilitator ITP1. The glyoxalase domain-containing protein RDO1 is not involved in the biosynthesis of itaconate and 2-hydroxyparaconate, however, it might play a role in the further conversion of 2-hydroxyparaconate to itatartarate. The protein is Mitochondrial tricarboxylate transporter 1 of Mycosarcoma maydis (Corn smut fungus).